Consider the following 393-residue polypeptide: GDSL esterase/lipase At1g28600 (393 aa).

A signal peptide spans 1 to 22 (MASLDSLVIFLFSTLFVTIVSS). Ser-38 functions as the Nucleophile in the catalytic mechanism. N-linked (GlcNAc...) asparagine glycans are attached at residues Asn-133 and Asn-317. Catalysis depends on residues Asp-340 and His-343. N-linked (GlcNAc...) asparagine glycosylation occurs at Asn-382.

This sequence belongs to the 'GDSL' lipolytic enzyme family.

Its subcellular location is the secreted. The protein is GDSL esterase/lipase At1g28600 of Arabidopsis thaliana (Mouse-ear cress).